The following is a 340-amino-acid chain: Myomesin-1 (340 aa).

The segment at 177 to 212 (AEKARLKSRPSAPXTGQIIVTEEEPSEEAGTENXQR) is disordered. Positions 197-206 (TEEEPSEEAG) are enriched in acidic residues.

In terms of assembly, homodimer. Interacts with TTN/titin and PNKD. As to expression, seems to be expressed in all cardiac and skeletal fibers.

Its subcellular location is the cytoplasm. It is found in the myofibril. It localises to the sarcomere. The protein resides in the m line. Its function is as follows. Major component of the vertebrate myofibrillar M band. Binds myosin, titin, and light meromyosin. This binding is dose dependent. The chain is Myomesin-1 (MYOM1) from Bos taurus (Bovine).